Reading from the N-terminus, the 507-residue chain is ATP synthase subunit alpha (507 aa).

An ATP-binding site is contributed by glycine 168–threonine 175.

This sequence belongs to the ATPase alpha/beta chains family. F-type ATPases have 2 components, CF(1) - the catalytic core - and CF(0) - the membrane proton channel. CF(1) has five subunits: alpha(3), beta(3), gamma(1), delta(1), epsilon(1). CF(0) has three main subunits: a(1), b(2) and c(9-12). The alpha and beta chains form an alternating ring which encloses part of the gamma chain. CF(1) is attached to CF(0) by a central stalk formed by the gamma and epsilon chains, while a peripheral stalk is formed by the delta and b chains.

The protein localises to the cell membrane. The catalysed reaction is ATP + H2O + 4 H(+)(in) = ADP + phosphate + 5 H(+)(out). Its function is as follows. Produces ATP from ADP in the presence of a proton gradient across the membrane. The alpha chain is a regulatory subunit. This chain is ATP synthase subunit alpha, found in Mesomycoplasma hyopneumoniae (strain 7448) (Mycoplasma hyopneumoniae).